The sequence spans 929 residues: Isoleucine--tRNA ligase (929 aa).

A 'HIGH' region motif is present at residues 58 to 68 (PYANGDIHIGH). E563 contributes to the L-isoleucyl-5'-AMP binding site. The short motif at 605–609 (KMSKS) is the 'KMSKS' region element. Position 608 (K608) interacts with ATP. The Zn(2+) site is built by C892, C895, C912, and C915.

Belongs to the class-I aminoacyl-tRNA synthetase family. IleS type 1 subfamily. In terms of assembly, monomer. It depends on Zn(2+) as a cofactor.

Its subcellular location is the cytoplasm. The catalysed reaction is tRNA(Ile) + L-isoleucine + ATP = L-isoleucyl-tRNA(Ile) + AMP + diphosphate. In terms of biological role, catalyzes the attachment of isoleucine to tRNA(Ile). As IleRS can inadvertently accommodate and process structurally similar amino acids such as valine, to avoid such errors it has two additional distinct tRNA(Ile)-dependent editing activities. One activity is designated as 'pretransfer' editing and involves the hydrolysis of activated Val-AMP. The other activity is designated 'posttransfer' editing and involves deacylation of mischarged Val-tRNA(Ile). This is Isoleucine--tRNA ligase from Neisseria meningitidis serogroup C / serotype 2a (strain ATCC 700532 / DSM 15464 / FAM18).